Here is a 191-residue protein sequence, read N- to C-terminus: Cytochrome b-245 light chain (191 aa).

Residues 2 to 7 (GQIEWA) are Cytoplasmic-facing. A helical transmembrane segment spans residues 8–30 (MWANEQALASGLILITGGIVATA). The Extracellular portion of the chain corresponds to 31-35 (GQFTQ). Residues 36–53 (WYLGAYSIAAGVLVCLLE) form a helical membrane-spanning segment. Residues 54–69 (YPRGKRSKGSTMERCG) lie on the Cytoplasmic side of the membrane. Residues 70-80 (QKYLTRVVKLF) lie within the membrane without spanning it. Residues 81–86 (GPLTRN) lie on the Cytoplasmic side of the membrane. Residues 87–104 (YYIRAFLHLGLAVPAGFL) traverse the membrane as a helical segment. Residue Leu105 is a topological domain, extracellular. The helical transmembrane segment at 106-126 (ATILGTACLAIASGIYLLAAI) threads the bilayer. Topologically, residues 127-191 (RGEQWSPIEP…NPMPVNDEVV (65 aa)) are cytoplasmic. The disordered stretch occupies residues 134–191 (IEPKPKERPQIGGTIKQPPSNPPPRPPAEARKKPSEEAAGVPTGGPQENPMPVNDEVV). A Phosphothreonine modification is found at Thr147. Lys149 participates in a covalent cross-link: Glycyl lysine isopeptide (Lys-Gly) (interchain with G-Cter in ubiquitin). Residue Ser168 is modified to Phosphoserine.

This sequence belongs to the p22phox family. Component of the phagocyte NADPH oxidase core complex/cytochrome b558 complex, composed of CYBB (heavy chain (beta)) and CYBA (light chain (alpha)). Component of the phagocyte NADPH oxidase complex composed of an obligatory core heterodimer formed by the membrane proteins CYBA and CYBB and the cytosolic regulatory subunits NCF1/p47-phox, NCF2/p67-phox, NCF4/p40-phox and the small GTPase RAC1 or RAC2. Interacts with NCF1 (via SH3 domain). Interacts with SH3PXD2A. Interacts with DUOX1, DUOX2 and TPO. Interacts with NOX4; this interaction mediates superoxide generation. Interacts with calprotectin (S100A8/9). Interacts with GBP7. Interacts with NOXO1. Forms a heterodimer with NOX3 and is essential for activity and cell membrane localization of NOX3. Interacts with NOX1. Phosphorylation at Thr-147 enhances NADPH oxidase activity by promoting NCF1/p47-phox binding. In terms of processing, ubiquitinated at Lys-149 likely by RNF145.

Its subcellular location is the cell membrane. Subunit of NADPH oxidase complexes that is required for the NADPH oxidase activity that generates, in various cell types, superoxide from molecular oxygen utilizing NADPH as an electron donor. Subunit of the phagocyte NADPH oxidase complex that mediates the transfer of electrons from cytosolic NADPH to O2 to produce the superoxide anion (O2(-)). In the activated complex, electrons are first transferred from NADPH to flavin adenine dinucleotide (FAD) and subsequently transferred via two heme molecules to molecular oxygen, producing superoxide through an outer-sphere reaction. Activation of the NADPH oxidase complex is initiated by the assembly of cytosolic subunits of the NADPH oxidase complex with the core NADPH oxidase complex to form a complex at the plasma membrane or phagosomal membrane. This activation process is initiated by phosphorylation dependent binding of the cytosolic NCF1/p47-phox subunit to the C-terminus of CYBA/p22-phox. Aassociates with NOX3 to form a functional NADPH oxidase constitutively generating superoxide. In Bos taurus (Bovine), this protein is Cytochrome b-245 light chain.